The sequence spans 942 residues: Diacylglycerol kinase theta (942 aa).

The tract at residues 1-59 (MAAAAEPGARAWLGGGSPRPGSPACSPVLGSGGRARPGPGPGPGPERAGVRAPGPAAAP) is disordered. 2 positions are modified to phosphoserine: Ser22 and Ser26. Low complexity predominate over residues 45-59 (PERAGVRAPGPAAAP). Phorbol-ester/DAG-type zinc fingers lie at residues 60 to 108 (GHSF…RIPC), 121 to 168 (AHCF…CSDC), and 183 to 234 (HHHW…APEC). A disordered region spans residues 269-295 (EPGEGGDGADGSAAVGPGRETQATPES). In terms of domain architecture, Ras-associating spans 395-494 (AQEVLKIYPG…TRFYVAESRD (100 aa)). 2 consecutive short sequence motifs (LXXLL motif) follow at residues 555–559 (LYMLL) and 574–578 (LPDLL). The DAGKc domain maps to 584 to 721 (PDSCPLLVFV…MDRWTILLDA (138 aa)). The interval 908–942 (PKVHMLRKAKQKPRRAGTTRDARADAAPAPESDPR) is disordered. Over residues 911–924 (HMLRKAKQKPRRAG) the composition is skewed to basic residues. Low complexity predominate over residues 932–942 (DAAPAPESDPR).

This sequence belongs to the eukaryotic diacylglycerol kinase family. In terms of assembly, interacts with RHOA (constitutively activated, GTP-bound); the interaction inhibits DGKQ. Interacts with PRKCE. Interacts with PRKCH. Interacts with PLCB1. Interacts with NR5A1; the interaction requires both LXXLL motifs in DGKQ and is required for full phosphatidic acid-mediated activation of NR5A1. In terms of processing, phosphorylated by PRKCE and PRKCH in vitro.

Its subcellular location is the cytoplasm. It is found in the cytosol. It localises to the cell membrane. The protein resides in the synapse. The protein localises to the cytoskeleton. Its subcellular location is the nucleus. It is found in the nucleus speckle. It localises to the nucleus matrix. It carries out the reaction a 1,2-diacyl-sn-glycerol + ATP = a 1,2-diacyl-sn-glycero-3-phosphate + ADP + H(+). The catalysed reaction is a 1-O-alkyl-sn-glycerol + ATP = a 1-O-alkyl-sn-glycero-3-phosphate + ADP + H(+). The enzyme catalyses 1-O-alkyl-2-acyl-sn-glycerol + ATP = 1-O-alkyl-2-acyl-sn-glycero-3-phosphate + ADP + H(+). It catalyses the reaction 1,2-di-(9Z-octadecenoyl)-sn-glycerol + ATP = 1,2-di-(9Z-octadecenoyl)-sn-glycero-3-phosphate + ADP + H(+). It carries out the reaction 1-O-hexadecyl-sn-glycerol + ATP = 1-O-hexadecyl-sn-glycero-3-phosphate + ADP + H(+). The catalysed reaction is 1-O-hexadecyl-2-acetyl-sn-glycerol + ATP = 1-O-hexadecyl-2-acetyl-sn-glycero-3-phosphate + ADP + H(+). The enzyme catalyses 1-octadecanoyl-2-(5Z,8Z,11Z,14Z-eicosatetraenoyl)-sn-glycerol + ATP = 1-octadecanoyl-2-(5Z,8Z,11Z,14Z-eicosatetraenoyl)-sn-glycero-3-phosphate + ADP + H(+). Its pathway is lipid metabolism; glycerolipid metabolism. With respect to regulation, activated by phosphatidylserine. In terms of biological role, diacylglycerol kinase that converts diacylglycerol/DAG into phosphatidic acid/phosphatidate/PA and regulates the respective levels of these two bioactive lipids. Thereby, acts as a central switch between the signaling pathways activated by these second messengers with different cellular targets and opposite effects in numerous biological processes. Within the adrenocorticotropic hormone signaling pathway, produces phosphatidic acid which in turn activates NR5A1 and subsequent steroidogenic gene transcription. Also functions downstream of the nerve growth factor signaling pathway being specifically activated in the nucleus by the growth factor. Through its diacylglycerol activity also regulates synaptic vesicle endocytosis. The sequence is that of Diacylglycerol kinase theta from Homo sapiens (Human).